The following is a 425-amino-acid chain: UPF0229 protein YE2273 (425 aa).

The tract at residues Thr84–Glu110 is disordered. Residues Gln92 to Asp108 show a composition bias toward gly residues.

It belongs to the UPF0229 family.

The sequence is that of UPF0229 protein YE2273 from Yersinia enterocolitica serotype O:8 / biotype 1B (strain NCTC 13174 / 8081).